Consider the following 159-residue polypeptide: Growth arrest and DNA damage-inducible protein GADD45 gamma (159 aa).

Residues 43 to 86 (VYESAKVLNVDPDNVTFCVLAADEEDEGDIALQIHFTLIQAFCC) are homodimerization.

This sequence belongs to the GADD45 family. As to quaternary structure, undergoes concentration-dependent homodimerization, which is required for growth inhibititory activity and enhances interaction with PCNA. Interacts with GADD45GIP1. Interacts with PCNA.

Involved in the regulation of growth and apoptosis. Mediates activation of stress-responsive MTK1/MEKK4 MAPKKK. This Mus musculus (Mouse) protein is Growth arrest and DNA damage-inducible protein GADD45 gamma (Gadd45g).